The primary structure comprises 213 residues: Inactive ribonuclease-like protein 10 (213 aa).

Positions 1 to 24 (MKLTLVQFFFMMLLLLLGLGVGLG) are cleaved as a signal peptide. Asn128 is a glycosylation site (N-linked (GlcNAc...) asparagine).

This sequence belongs to the pancreatic ribonuclease family. In terms of processing, the N-terminus is blocked. Glycosylated. Male-specific expression in proximal caput of the epididymis.

The protein localises to the secreted. Functionally, secreted proximal epididymal protein required for post-testicular sperm maturation and male fertility. May be involved in sperm adhesion to the egg zona pellucida. Does not have ribonuclease activity. The sequence is that of Inactive ribonuclease-like protein 10 (RNASE10) from Sus scrofa (Pig).